We begin with the raw amino-acid sequence, 149 residues long: Large ribosomal subunit protein uL15 (149 aa).

A disordered region spans residues 21 to 54 (RGSASGLGCTSGKGNKGQNARSGGGVRPGFEGGQ). 2 stretches are compositionally biased toward gly residues: residues 23 to 35 (SASGLGCTSGKGN) and 42 to 52 (SGGGVRPGFEG).

The protein belongs to the universal ribosomal protein uL15 family. In terms of assembly, part of the 50S ribosomal subunit.

Binds to the 23S rRNA. This chain is Large ribosomal subunit protein uL15, found in Lawsonia intracellularis (strain PHE/MN1-00).